Here is a 155-residue protein sequence, read N- to C-terminus: 6,7-dimethyl-8-ribityllumazine synthase (155 aa).

Residues Trp-22, Ser-56 to Glu-58, and Ala-80 to Ile-82 each bind 5-amino-6-(D-ribitylamino)uracil. Residue Ala-85–Thr-86 participates in (2S)-2-hydroxy-3-oxobutyl phosphate binding. Residue His-88 is the Proton donor of the active site. Position 113 (Phe-113) interacts with 5-amino-6-(D-ribitylamino)uracil. Arg-127 provides a ligand contact to (2S)-2-hydroxy-3-oxobutyl phosphate.

The protein belongs to the DMRL synthase family.

It carries out the reaction (2S)-2-hydroxy-3-oxobutyl phosphate + 5-amino-6-(D-ribitylamino)uracil = 6,7-dimethyl-8-(1-D-ribityl)lumazine + phosphate + 2 H2O + H(+). Its pathway is cofactor biosynthesis; riboflavin biosynthesis; riboflavin from 2-hydroxy-3-oxobutyl phosphate and 5-amino-6-(D-ribitylamino)uracil: step 1/2. Its function is as follows. Catalyzes the formation of 6,7-dimethyl-8-ribityllumazine by condensation of 5-amino-6-(D-ribitylamino)uracil with 3,4-dihydroxy-2-butanone 4-phosphate. This is the penultimate step in the biosynthesis of riboflavin. This Chloroflexus aurantiacus (strain ATCC 29364 / DSM 637 / Y-400-fl) protein is 6,7-dimethyl-8-ribityllumazine synthase.